Reading from the N-terminus, the 502-residue chain is Neuronal acetylcholine receptor subunit alpha-7 (502 aa).

Positions 1 to 22 (MCGRRGGIWLALAAALLHVSLQ) are cleaved as a signal peptide. Residues 23–233 (GEFQRRLYKE…VTMRRRTLYY (211 aa)) lie on the Extracellular side of the membrane. Arginine 42 and valine 44 together coordinate Ca(2+). 3 N-linked (GlcNAc...) asparagine glycosylation sites follow: asparagine 46, asparagine 90, and asparagine 133. An intrachain disulfide couples cysteine 150 to cysteine 164. 2 residues coordinate Ca(2+): serine 172 and tyrosine 210. Cysteine 212 and cysteine 213 are oxidised to a cystine. A run of 3 helical transmembrane segments spans residues 234–254 (GLNLLIPCVLISALALLVFLL), 262–282 (ISLGITVLLSLTVFMLLVAEI), and 295–315 (QYFASTMIIVGLSVVVTVIVL). The segment at 260-267 (EKISLGIT) is essential for TMEM35A/NACHO-mediated proper subunit assembly and trafficking to cell membrane. At 316 to 469 (RYHHHDPDGG…WKFAACVVDR (154 aa)) the chain is on the cytoplasmic side. The helical transmembrane segment at 470-490 (LCLMAFSVFTIICTIGILMSA) threads the bilayer.

This sequence belongs to the ligand-gated ion channel (TC 1.A.9) family. Acetylcholine receptor (TC 1.A.9.1) subfamily. Alpha-7/CHRNA7 sub-subfamily. In terms of assembly, homopentamer. Can also form heteropentamers with CHRNB2, mainly found in basal forebrain cholinergic neurons. Interacts with RIC3; which is required for proper folding and assembly. Interacts with LYPD6. Interacts with CANX. Glycosylations at Asn-46, Asn-90 and Asn-133 are essential for TMEM35A/NACHO-mediated proper subunit assembly and trafficking to the cell membrane. As to expression, higly expressed in brain. ALso expressed in immune cells sucha as macrophages.

It localises to the postsynaptic cell membrane. Its subcellular location is the cell membrane. It carries out the reaction K(+)(in) = K(+)(out). The enzyme catalyses Na(+)(in) = Na(+)(out). It catalyses the reaction Ca(2+)(in) = Ca(2+)(out). The catalysed reaction is choline(out) = choline(in). It carries out the reaction NH4(+)(in) = NH4(+)(out). The enzyme catalyses L-arginine(in) = L-arginine(out). It catalyses the reaction guanidine(out) = guanidine(in). Its activity is regulated as follows. Activated by a myriad of ligands such as acetylcholine, cytisine, nicotine, choline and epibatidine. Oligomeric amyloid-beta protein 42 activates specifially CHRNA7:CHRNB2 nAchRs. Activity is modulated by positive allosteric modulators (PAMs), such as flavonoids, with a wide range of chemical diversity, pharmacological sensitivity and efficacy. AChR activity is inhibited by the antagonists alpha-conotoxons RgIA, ImI and ImII, small disulfide-constrained peptides from cone snails. Its function is as follows. Component of neuronal acetylcholine receptors (nAChRs) that function as pentameric, ligand-gated cation channels with high calcium permeability among other activities. nAChRs are excitatory neurotrasnmitter receptors formed by a collection of nAChR subunits known to mediate synaptic transmission in the nervous system and the neuromuscular junction. Each nAchR subunit confers differential attributes to channel properties, including activation, deactivation and desensitization kinetics, pH sensitivity, cation permeability, and binding to allosteric modulators. CHRNA7 forms homopentameric neuronal acetylcholine receptors abundantly expressed in the central nervous system, characterized by fast desensitization and high calcium permeability. Also forms heteropentamers with CHRNB2, mainly expressed in basal forebrain cholinergic neurons. Involved in the modulation of calcium-dependent signaling pathways and influences the release of neurotransmitters, including dopamine, glutamate and GABA. Involved in the modulation of calcium-dependent signaling pathways and influences the release of neurotransmitters, including dopamine, glutamate and GABA. Also expressed in non-neuronal cells such as immune cells like lymphocytes, monocytes and macrophages. In T cells, activation induces metabotropic signaling that results in an increase of intracellular Ca2+ concentrations, independent of ionotropic receptor functions. In macrophages, required for acetylcholine-mediated inhibition of TNF and other inflammatory cytokine release. Once activated by acetylcholine, nicotine or other agonists, selectively inhibits production of pro-inflammatory cytokines while leaving anti-inflammatory cytokines undisturbed. Stimulates the cholinergic anti-inflammatory pathway, controlling inflammation by inhibiting NFKB nuclear translocation and activating the JAK2-STAT3 pathway, independently of ion channel activity. Also expressed in the urothelium where it modulates reflex bladder activity by increasing intracellular calcium through internal stores and decreasing basal ATP release. This Mus musculus (Mouse) protein is Neuronal acetylcholine receptor subunit alpha-7 (Chrna7).